The following is a 62-amino-acid chain: Kurtoxin-like I (62 aa).

Positions 2–62 (IDGYPVDNWN…ARIKRGGRCN (61 aa)) constitute an LCN-type CS-alpha/beta domain. 4 disulfide bridges follow: C12-C61, C16-C37, C23-C44, and C27-C46.

Expressed by the venom gland.

Its subcellular location is the secreted. Functionally, this neurotoxin acts on sodium and calcium channels. Potently inhibits native voltage-gated T-type calcium channel activity in mouse male germ cells and weakly blocks Cav3.3/CACNA1I channels expressed in Xenopus oocytes. In addition, significantly slows the inactivation of activated recombinant sodium channels (Nav1.5/SCN5A). The chain is Kurtoxin-like I from Parabuthus granulatus (Granulated thick-tailed scorpion).